Reading from the N-terminus, the 277-residue chain is Diaminopimelate epimerase (277 aa).

Residues asparagine 13, glutamine 46, and asparagine 66 each coordinate substrate. Cysteine 75 (proton donor) is an active-site residue. Residues 76–77 (GN), asparagine 160, asparagine 193, and 211–212 (ER) each bind substrate. The active-site Proton acceptor is the cysteine 220. 221-222 (GS) is a substrate binding site.

Belongs to the diaminopimelate epimerase family. As to quaternary structure, homodimer.

It localises to the cytoplasm. The enzyme catalyses (2S,6S)-2,6-diaminopimelate = meso-2,6-diaminopimelate. It functions in the pathway amino-acid biosynthesis; L-lysine biosynthesis via DAP pathway; DL-2,6-diaminopimelate from LL-2,6-diaminopimelate: step 1/1. Catalyzes the stereoinversion of LL-2,6-diaminopimelate (L,L-DAP) to meso-diaminopimelate (meso-DAP), a precursor of L-lysine and an essential component of the bacterial peptidoglycan. This is Diaminopimelate epimerase from Legionella pneumophila (strain Lens).